Here is a 294-residue protein sequence, read N- to C-terminus: Elongation factor Ts (294 aa).

Residues threonine 80–valine 83 are involved in Mg(2+) ion dislocation from EF-Tu.

This sequence belongs to the EF-Ts family.

The protein resides in the cytoplasm. Associates with the EF-Tu.GDP complex and induces the exchange of GDP to GTP. It remains bound to the aminoacyl-tRNA.EF-Tu.GTP complex up to the GTP hydrolysis stage on the ribosome. The protein is Elongation factor Ts of Listeria monocytogenes serotype 4b (strain CLIP80459).